A 41-amino-acid chain; its full sequence is Large ribosomal subunit protein bL36B (41 aa).

This sequence belongs to the bacterial ribosomal protein bL36 family.

The polypeptide is Large ribosomal subunit protein bL36B (Neisseria meningitidis serogroup C (strain 053442)).